The following is a 395-amino-acid chain: MATLQAIKYSRGKLLVLDQLRLPHENHYDEVSTAEEAFDCIRSMRVRGAPAIAIVAALAHAVELHNGDCTATEPEEVIAHIEKRLDYLKESRPTAVDLSNAITLLKLATRAANLEGLAHPEAKEAILNTYIQTAEEILAKDLHNNTSIGSYGTAWLQQQYSASSEKPISVLTHCNTGSLATSGHGTALGIIRTLHSEGLLKHAYCTETRPYNQGSRLTSFELVFEGIPSTLITDSMAGALFNLHRERMNIGAVIVGADRVVRNGDTANKIGTYQLAVLARHHGVKFVVAAPTTSIDLETGNGSAIEIEERKREELTQISGAIVNEDGTVDTSKTARVAIADQRIGVWNPAFDVTPHELIDAIVTERGTVVKGADGKFDFSQVLPERLASVAARQL.

The active-site Proton donor is the D258.

The protein belongs to the eIF-2B alpha/beta/delta subunits family. MtnA subfamily.

It localises to the cytoplasm. The protein resides in the nucleus. It catalyses the reaction 5-(methylsulfanyl)-alpha-D-ribose 1-phosphate = 5-(methylsulfanyl)-D-ribulose 1-phosphate. It participates in amino-acid biosynthesis; L-methionine biosynthesis via salvage pathway; L-methionine from S-methyl-5-thio-alpha-D-ribose 1-phosphate: step 1/6. Catalyzes the interconversion of methylthioribose-1-phosphate (MTR-1-P) into methylthioribulose-1-phosphate (MTRu-1-P). This is Methylthioribose-1-phosphate isomerase from Podospora anserina (strain S / ATCC MYA-4624 / DSM 980 / FGSC 10383) (Pleurage anserina).